The sequence spans 618 residues: Proline--tRNA ligase (618 aa).

This sequence belongs to the class-II aminoacyl-tRNA synthetase family. ProS type 1 subfamily. As to quaternary structure, homodimer.

It is found in the cytoplasm. The catalysed reaction is tRNA(Pro) + L-proline + ATP = L-prolyl-tRNA(Pro) + AMP + diphosphate. Catalyzes the attachment of proline to tRNA(Pro) in a two-step reaction: proline is first activated by ATP to form Pro-AMP and then transferred to the acceptor end of tRNA(Pro). As ProRS can inadvertently accommodate and process non-cognate amino acids such as alanine and cysteine, to avoid such errors it has two additional distinct editing activities against alanine. One activity is designated as 'pretransfer' editing and involves the tRNA(Pro)-independent hydrolysis of activated Ala-AMP. The other activity is designated 'posttransfer' editing and involves deacylation of mischarged Ala-tRNA(Pro). The misacylated Cys-tRNA(Pro) is not edited by ProRS. This Streptococcus pyogenes serotype M28 (strain MGAS6180) protein is Proline--tRNA ligase.